The sequence spans 348 residues: Uroporphyrinogen decarboxylase (348 aa).

Substrate is bound by residues 29–33 (RQAGR), Asp-79, Tyr-155, Thr-210, and His-326.

It belongs to the uroporphyrinogen decarboxylase family. As to quaternary structure, homodimer.

It is found in the cytoplasm. The enzyme catalyses uroporphyrinogen III + 4 H(+) = coproporphyrinogen III + 4 CO2. It functions in the pathway porphyrin-containing compound metabolism; protoporphyrin-IX biosynthesis; coproporphyrinogen-III from 5-aminolevulinate: step 4/4. Its function is as follows. Catalyzes the decarboxylation of four acetate groups of uroporphyrinogen-III to yield coproporphyrinogen-III. This chain is Uroporphyrinogen decarboxylase, found in Rhodospirillum rubrum (strain ATCC 11170 / ATH 1.1.1 / DSM 467 / LMG 4362 / NCIMB 8255 / S1).